The chain runs to 259 residues: Undecaprenyl-diphosphatase 3 (259 aa).

The next 8 membrane-spanning stretches (helical) occupy residues 1-21 (MNWL…FLPI), 39-59 (AGLF…FIYY), 71-91 (FSKL…IGLL), 99-119 (ISKT…FLYM), 133-153 (ITYK…FPAI), 174-194 (AYFS…LQFV), 208-228 (SLIV…SWMI), and 239-259 (FAYY…TDVF).

It belongs to the UppP family.

It localises to the cell membrane. It catalyses the reaction di-trans,octa-cis-undecaprenyl diphosphate + H2O = di-trans,octa-cis-undecaprenyl phosphate + phosphate + H(+). Catalyzes the dephosphorylation of undecaprenyl diphosphate (UPP). Confers resistance to bacitracin. This is Undecaprenyl-diphosphatase 3 from Bacillus cereus (strain ATCC 14579 / DSM 31 / CCUG 7414 / JCM 2152 / NBRC 15305 / NCIMB 9373 / NCTC 2599 / NRRL B-3711).